The primary structure comprises 410 residues: Elongation factor Tu, chloroplastic (410 aa).

A tr-type G domain is found at K10–E215. The tract at residues G19–T26 is G1. G19–T26 contributes to the GTP binding site. Position 26 (T26) interacts with Mg(2+). Residues G61–N65 form a G2 region. Residues D82–G85 are G3. GTP contacts are provided by residues D82–H86 and N137–D140. The segment at N137–D140 is G4. The interval S175–L177 is G5.

It belongs to the TRAFAC class translation factor GTPase superfamily. Classic translation factor GTPase family. EF-Tu/EF-1A subfamily.

The protein localises to the plastid. Its subcellular location is the chloroplast. The enzyme catalyses GTP + H2O = GDP + phosphate + H(+). Its function is as follows. GTP hydrolase that promotes the GTP-dependent binding of aminoacyl-tRNA to the A-site of ribosomes during protein biosynthesis. This is Elongation factor Tu, chloroplastic (tufA) from Cyanidium caldarium (Red alga).